The primary structure comprises 809 residues: Chloride channel protein F (809 aa).

Residues 1 to 65 lie on the Cytoplasmic side of the membrane; the sequence is MSTSKYSKMI…SWAKFARLNN (65 aa). Helical transmembrane passes span 66 to 86, 110 to 130, 152 to 172, 218 to 238, 246 to 266, 295 to 315, 333 to 353, 395 to 415, 425 to 445, 459 to 479, and 486 to 506; these read FYIW…LVAV, LQYL…CFII, FWNP…GLLL, AACC…GVLF, FYLI…AVGI, LIAF…FISL, ITPF…SFPL, GIIL…AVSI, IPLF…MLVL, VVGA…AMII, and LTYM…GNLL. Residues 539–597 enclose the CBS 1 domain; sequence MKRDLYYVCQNTTLSQISNLLKRVDEHSIPVVSSDNDLQLIGTISTTTLEEVIAYHERL. 2 disordered regions span residues 604–646 and 692–729; these read PLSL…NNQN and NNNF…NNNS. Residues 620 to 646 show a composition bias toward low complexity; it reads NDNINNNQNNNNNNNNNNNNNNSNNQN. Residues 756–809 form the CBS 2 domain; sequence IDSSPFQIQETMPVRKIVFMFMMLGGNILYVTNKGKLTGVVAKTELVHQNNNKH.

The protein belongs to the chloride channel (TC 2.A.49) family.

It is found in the membrane. Its function is as follows. Voltage-gated chloride channel. Chloride channels may have several functions including the regulation of cell volume, membrane potential stabilization and signal transduction. This chain is Chloride channel protein F (clcF), found in Dictyostelium discoideum (Social amoeba).